A 362-amino-acid polypeptide reads, in one-letter code: Mortality factor 4-like protein 1 (362 aa).

Residues 12-51 (QEGERVLCFHGPLLYEAKCVKVAIKDKQVKYFIHYSGWNK) form the Tudor-knot domain. Residues 26-62 (YEAKCVKVAIKDKQVKYFIHYSGWNKKSAVRPRRSEK) form an interaction with KAT8 region. The segment at 113-182 (RELQKANQEQ…RKKRARVDPT (70 aa)) is disordered. Residues 133–266 (PGKKTSGLQQ…VAGIKEYFNV (134 aa)) form a sufficient for interaction with SIN3A region. The Nuclear localization signal signature appears at 135–146 (KKTSGLQQKNVE). Residue Lys143 is modified to N6-acetyllysine. The segment at 164–230 (STSETPQPPR…FYLPAKKNVD (67 aa)) is interaction with RB1-1. Positions 188–342 (TFMNRVEVKV…FLKYLAKNSA (155 aa)) are sufficient for interaction with PHF12. One can recognise an MRG domain in the interval 191-362 (NRVEVKVKIP…APPEYHRKAV (172 aa)). Residues 323–344 (LALLLNYLHDFLKYLAKNSATL) are interaction with RB1-2.

In terms of assembly, component of the NuA4 histone acetyltransferase complex which contains the catalytic subunit KAT5/TIP60 and the subunits EP400, TRRAP/PAF400, BRD8/SMAP, EPC1, DMAP1/DNMAP1, RUVBL1/TIP49, RUVBL2, ING3, actin, ACTL6A/BAF53A, MORF4L1/MRG15, MORF4L2/MRGX, MRGBP, YEATS4/GAS41, VPS72/YL1 and MEAF6. The NuA4 complex interacts with MYC and the adenovirus E1A protein. MORF4L1 may also participate in the formation of NuA4 related complexes which lack the KAT5/TIP60 catalytic subunit, but which include the SWI/SNF related protein SRCAP. Component of the mSin3A histone deacetylase complex, which includes SIN3A, HDAC2, ARID4B, MORF4L1, RBBP4/RbAp48, and RBBP7/RbAp46. May also interact with PHF12 and one or more as yet undefined members of the TLE (transducin-like enhancer of split) family of transcriptional repressors. Component of the SIN3B complex, which includes SIN3B, HDAC2 or HDAC1, PHF12 and MORF4L1. Interacts with RB1 and KAT8. Interacts with the N-terminus of MRFAP1. Found in a complex composed of MORF4L1, MRFAP1 and RB1. Interacts with the entire BRCA complex, which contains BRCA1, PALB2, BRCA2 and RAD51. Interacts with PALB2. Forms a complex with MSL1 and NUPR1.

The protein localises to the nucleus. Its function is as follows. Component of the NuA4 histone acetyltransferase (HAT) complex which is involved in transcriptional activation of select genes principally by acetylation of nucleosomal histones H4 and H2A. This modification may both alter nucleosome - DNA interactions and promote interaction of the modified histones with other proteins which positively regulate transcription. This complex may be required for the activation of transcriptional programs associated with oncogene and proto-oncogene mediated growth induction, tumor suppressor mediated growth arrest and replicative senescence, apoptosis, and DNA repair. The NuA4 complex ATPase and helicase activities seem to be, at least in part, contributed by the association of RUVBL1 and RUVBL2 with EP400. NuA4 may also play a direct role in DNA repair when directly recruited to sites of DNA damage. As part of the SIN3B complex represses transcription and counteracts the histone acetyltransferase activity of EP300 through the recognition H3K27ac marks by PHF12 and the activity of the histone deacetylase HDAC2. SIN3B complex is recruited downstream of the constitutively active genes transcriptional start sites through interaction with histones and mitigates histone acetylation and RNA polymerase II progression within transcribed regions contributing to the regulation of transcription. Required for homologous recombination repair (HRR) and resistance to mitomycin C (MMC). Involved in the localization of PALB2, BRCA2 and RAD51, but not BRCA1, to DNA-damage foci. In Homo sapiens (Human), this protein is Mortality factor 4-like protein 1.